The sequence spans 229 residues: Urease accessory protein UreF (229 aa).

Belongs to the UreF family. In terms of assembly, ureD, UreF and UreG form a complex that acts as a GTP-hydrolysis-dependent molecular chaperone, activating the urease apoprotein by helping to assemble the nickel containing metallocenter of UreC. The UreE protein probably delivers the nickel.

It is found in the cytoplasm. In terms of biological role, required for maturation of urease via the functional incorporation of the urease nickel metallocenter. This is Urease accessory protein UreF from Staphylococcus epidermidis (strain ATCC 12228 / FDA PCI 1200).